The following is a 338-amino-acid chain: Glyceraldehyde-3-phosphate dehydrogenase (338 aa).

Residues 13–14, Asp-35, and Arg-80 each bind NAD(+); that span reads RI. Residues 151–153, Thr-182, 211–212, and Arg-234 each bind D-glyceraldehyde 3-phosphate; these read SCT and TG. The active-site Nucleophile is the Cys-152. Asn-316 lines the NAD(+) pocket.

Belongs to the glyceraldehyde-3-phosphate dehydrogenase family. Homotetramer.

The protein resides in the cytoplasm. The catalysed reaction is D-glyceraldehyde 3-phosphate + phosphate + NAD(+) = (2R)-3-phospho-glyceroyl phosphate + NADH + H(+). Its pathway is carbohydrate degradation; glycolysis; pyruvate from D-glyceraldehyde 3-phosphate: step 1/5. The chain is Glyceraldehyde-3-phosphate dehydrogenase (GPDA) from Colletotrichum gloeosporioides (Anthracnose fungus).